The primary structure comprises 389 residues: Formate-dependent phosphoribosylglycinamide formyltransferase (389 aa).

Residues 12–13 (EL) and E72 contribute to the N(1)-(5-phospho-beta-D-ribosyl)glycinamide site. Residues R104, K145, 150–155 (SSGKGQ), 185–188 (EEFI), and E193 each bind ATP. The region spanning 109-301 (DLAAKELGLK…EFELHLRAVL (193 aa)) is the ATP-grasp domain. Mg(2+)-binding residues include E258 and E271. Residues D278, K350, and 357–358 (RR) each bind N(1)-(5-phospho-beta-D-ribosyl)glycinamide.

This sequence belongs to the PurK/PurT family. In terms of assembly, homodimer.

It carries out the reaction N(1)-(5-phospho-beta-D-ribosyl)glycinamide + formate + ATP = N(2)-formyl-N(1)-(5-phospho-beta-D-ribosyl)glycinamide + ADP + phosphate + H(+). It participates in purine metabolism; IMP biosynthesis via de novo pathway; N(2)-formyl-N(1)-(5-phospho-D-ribosyl)glycinamide from N(1)-(5-phospho-D-ribosyl)glycinamide (formate route): step 1/1. Its function is as follows. Involved in the de novo purine biosynthesis. Catalyzes the transfer of formate to 5-phospho-ribosyl-glycinamide (GAR), producing 5-phospho-ribosyl-N-formylglycinamide (FGAR). Formate is provided by PurU via hydrolysis of 10-formyl-tetrahydrofolate. The polypeptide is Formate-dependent phosphoribosylglycinamide formyltransferase (Phocaeicola vulgatus (strain ATCC 8482 / DSM 1447 / JCM 5826 / CCUG 4940 / NBRC 14291 / NCTC 11154) (Bacteroides vulgatus)).